The sequence spans 421 residues: Early growth response protein 2 (421 aa).

Residues 127-145 (CSSTSSSNASSGSPNLSCS) are compositionally biased toward low complexity. 3 disordered regions span residues 127-152 (CSST…PQSD), 179-200 (SPTA…ASDG), and 223-288 (SDRK…ERPY). Polar residues predominate over residues 236 to 247 (PLSTIRNFTLGG). C2H2-type zinc fingers lie at residues 288-312 (YPCP…IRIH), 318-340 (FQCR…IRTH), and 346-368 (FACD…TKIH).

Belongs to the EGR C2H2-type zinc-finger protein family.

Its subcellular location is the nucleus. Functionally, sequence-specific DNA-binding transcription factor. This is Early growth response protein 2 (egr2) from Xenopus laevis (African clawed frog).